The primary structure comprises 401 residues: Lipid-A-disaccharide synthase (401 aa).

Belongs to the LpxB family.

The catalysed reaction is a lipid X + a UDP-2-N,3-O-bis[(3R)-3-hydroxyacyl]-alpha-D-glucosamine = a lipid A disaccharide + UDP + H(+). It functions in the pathway bacterial outer membrane biogenesis; LPS lipid A biosynthesis. Functionally, condensation of UDP-2,3-diacylglucosamine and 2,3-diacylglucosamine-1-phosphate to form lipid A disaccharide, a precursor of lipid A, a phosphorylated glycolipid that anchors the lipopolysaccharide to the outer membrane of the cell. In Rhodospirillum centenum (strain ATCC 51521 / SW), this protein is Lipid-A-disaccharide synthase.